We begin with the raw amino-acid sequence, 213 residues long: Charged multivesicular body protein 2b (213 aa).

At Ala2 the chain carries N-acetylalanine. A coiled-coil region spans residues Gln25–Lys55. Positions Ala179–Ser194 are enriched in low complexity. The disordered stretch occupies residues Ala179–Ser199. A Phosphoserine modification is found at Ser199. Residues Glu201–Gly211 carry the MIT-interacting motif motif.

This sequence belongs to the SNF7 family. As to quaternary structure, probable core component of the endosomal sorting required for transport complex III (ESCRT-III). ESCRT-III components are thought to multimerize to form a flat lattice on the perimeter membrane of the endosome. Several assembly forms of ESCRT-III may exist that interact and act sequentially. Interacts with CHMP2A. Interacts with VPS4A. Interacts with VPS4B; the interaction is direct. In brain, it is expressed in all neuronal populations with a relatively enhanced expression in the hippocampus, frontal and temporal lobes and in both granule and Purkinje cells of the cerebellum. Not expressed in astrocytes or oligodendrocytes.

It is found in the cytoplasm. Its subcellular location is the cytosol. It localises to the late endosome membrane. Probable core component of the endosomal sorting required for transport complex III (ESCRT-III) which is involved in multivesicular bodies (MVBs) formation and sorting of endosomal cargo proteins into MVBs. MVBs contain intraluminal vesicles (ILVs) that are generated by invagination and scission from the limiting membrane of the endosome and mostly are delivered to lysosomes enabling degradation of membrane proteins, such as stimulated growth factor receptors, lysosomal enzymes and lipids. The MVB pathway appears to require the sequential function of ESCRT-O, -I,-II and -III complexes. ESCRT-III proteins mostly dissociate from the invaginating membrane before the ILV is released. The ESCRT machinery also functions in topologically equivalent membrane fission events, such as the terminal stages of cytokinesis. ESCRT-III proteins are believed to mediate the necessary vesicle extrusion and/or membrane fission activities, possibly in conjunction with the AAA ATPase VPS4. The polypeptide is Charged multivesicular body protein 2b (Chmp2b) (Mus musculus (Mouse)).